Reading from the N-terminus, the 662-residue chain is Glycogen debranching enzyme (662 aa).

D338 acts as the Nucleophile in catalysis. The active-site Proton donor is E373.

The protein belongs to the glycosyl hydrolase 13 family.

The enzyme catalyses Hydrolysis of (1-&gt;6)-alpha-D-glucosidic linkages to branches with degrees of polymerization of three or four glucose residues in limit dextrin.. It functions in the pathway glycan degradation; glycogen degradation. Removes maltotriose and maltotetraose chains that are attached by 1,6-alpha-linkage to the limit dextrin main chain, generating a debranched limit dextrin. The protein is Glycogen debranching enzyme of Yersinia pseudotuberculosis serotype I (strain IP32953).